Here is a 231-residue protein sequence, read N- to C-terminus: 7-cyano-7-deazaguanine synthase (231 aa).

8-18 is a binding site for ATP; the sequence is FSGGQDSTTCL. 4 residues coordinate Zn(2+): Cys188, Cys197, Cys200, and Cys203.

Belongs to the QueC family. Zn(2+) serves as cofactor.

It carries out the reaction 7-carboxy-7-deazaguanine + NH4(+) + ATP = 7-cyano-7-deazaguanine + ADP + phosphate + H2O + H(+). It participates in purine metabolism; 7-cyano-7-deazaguanine biosynthesis. Catalyzes the ATP-dependent conversion of 7-carboxy-7-deazaguanine (CDG) to 7-cyano-7-deazaguanine (preQ(0)). The protein is 7-cyano-7-deazaguanine synthase of Shigella flexneri serotype 5b (strain 8401).